The following is a 160-amino-acid chain: MKKEVTVESFELDHTIVKAPYIRLISEEVGPKGDIITNFDIRLIQPNENAMDTAGLHTIEHLLAKLIRQRIDGLIDCSPFGCRTGFHMIMWGKQDSEKIAQVIKSSLEEIAEGITWEDVPGTTIESCGNYKDHSLHSAKEWAKLILSQGISTDAFERKPI.

Positions 57, 61, and 127 each coordinate Fe cation.

It belongs to the LuxS family. Homodimer. Requires Fe cation as cofactor.

The enzyme catalyses S-(5-deoxy-D-ribos-5-yl)-L-homocysteine = (S)-4,5-dihydroxypentane-2,3-dione + L-homocysteine. In terms of biological role, involved in the synthesis of autoinducer 2 (AI-2) which is secreted by bacteria and is used to communicate both the cell density and the metabolic potential of the environment. The regulation of gene expression in response to changes in cell density is called quorum sensing. Catalyzes the transformation of S-ribosylhomocysteine (RHC) to homocysteine (HC) and 4,5-dihydroxy-2,3-pentadione (DPD). The protein is S-ribosylhomocysteine lyase of Streptococcus suis (strain 98HAH33).